The sequence spans 440 residues: Ribosomal protein uS12 methylthiotransferase RimO (440 aa).

One can recognise an MTTase N-terminal domain in the interval Thr8–His124. 6 residues coordinate [4Fe-4S] cluster: Cys17, Cys53, Cys87, Cys148, Cys152, and Cys155. Residues Leu134–Lys363 enclose the Radical SAM core domain. The TRAM domain occupies Glu366–Ser437.

This sequence belongs to the methylthiotransferase family. RimO subfamily. Requires [4Fe-4S] cluster as cofactor.

The protein resides in the cytoplasm. It carries out the reaction L-aspartate(89)-[ribosomal protein uS12]-hydrogen + (sulfur carrier)-SH + AH2 + 2 S-adenosyl-L-methionine = 3-methylsulfanyl-L-aspartate(89)-[ribosomal protein uS12]-hydrogen + (sulfur carrier)-H + 5'-deoxyadenosine + L-methionine + A + S-adenosyl-L-homocysteine + 2 H(+). In terms of biological role, catalyzes the methylthiolation of an aspartic acid residue of ribosomal protein uS12. This Chlorobium luteolum (strain DSM 273 / BCRC 81028 / 2530) (Pelodictyon luteolum) protein is Ribosomal protein uS12 methylthiotransferase RimO.